Here is a 200-residue protein sequence, read N- to C-terminus: Transcription elongation factor A protein-like 3 (200 aa).

A disordered region spans residues 1–200 (MEKPYNKNEG…QRGLHDIPYL (200 aa)). The segment covering 20–36 (DEVEPDDEGKSDEEEKP) has biased composition (acidic residues). Ser30 bears the Phosphoserine mark. Residues 37-50 (DVEGKTECEGKRED) are compositionally biased toward basic and acidic residues. Positions 51–64 (EGEPGDEGQLEDEG) are enriched in acidic residues. At Ser65 the chain carries Phosphoserine. 3 stretches are compositionally biased toward basic and acidic residues: residues 65–80 (SQEK…KPQG), 96–107 (AAEKRPAEDYVP), and 115–154 (DRGT…EELR).

It belongs to the TFS-II family. TFA subfamily.

The protein localises to the nucleus. Functionally, may be involved in transcriptional regulation. In Homo sapiens (Human), this protein is Transcription elongation factor A protein-like 3 (TCEAL3).